A 464-amino-acid chain; its full sequence is Asparagine--tRNA ligase (464 aa).

This sequence belongs to the class-II aminoacyl-tRNA synthetase family. In terms of assembly, homodimer.

Its subcellular location is the cytoplasm. The enzyme catalyses tRNA(Asn) + L-asparagine + ATP = L-asparaginyl-tRNA(Asn) + AMP + diphosphate + H(+). This is Asparagine--tRNA ligase from Azobacteroides pseudotrichonymphae genomovar. CFP2.